Consider the following 255-residue polypeptide: Small ribosomal subunit protein uS2 (255 aa).

The protein belongs to the universal ribosomal protein uS2 family.

The protein is Small ribosomal subunit protein uS2 of Streptococcus pyogenes serotype M49 (strain NZ131).